We begin with the raw amino-acid sequence, 216 residues long: ATP-dependent Clp protease proteolytic subunit (216 aa).

Residue S120 is the Nucleophile of the active site. H145 is an active-site residue.

The protein belongs to the peptidase S14 family. In terms of assembly, fourteen ClpP subunits assemble into 2 heptameric rings which stack back to back to give a disk-like structure with a central cavity, resembling the structure of eukaryotic proteasomes.

It is found in the cytoplasm. It catalyses the reaction Hydrolysis of proteins to small peptides in the presence of ATP and magnesium. alpha-casein is the usual test substrate. In the absence of ATP, only oligopeptides shorter than five residues are hydrolyzed (such as succinyl-Leu-Tyr-|-NHMec, and Leu-Tyr-Leu-|-Tyr-Trp, in which cleavage of the -Tyr-|-Leu- and -Tyr-|-Trp bonds also occurs).. Functionally, cleaves peptides in various proteins in a process that requires ATP hydrolysis. Has a chymotrypsin-like activity. Plays a major role in the degradation of misfolded proteins. This chain is ATP-dependent Clp protease proteolytic subunit, found in Cupriavidus pinatubonensis (strain JMP 134 / LMG 1197) (Cupriavidus necator (strain JMP 134)).